Consider the following 403-residue polypeptide: Serine/threonine transporter SstT (403 aa).

9 helical membrane passes run 14–34, 44–64, 79–99, 138–158, 175–195, 214–234, 295–315, 327–347, and 353–373; these read VTQIVIGLLAGIALALLAPAI, VFVSALKAVAPVLVFILVMAS, ILWLYLLGTFAAAVVAVFASM, ALLNANFIGVLTWAIGLGVAL, GVTLIVRVVIRFAPLGIFGLV, LAVLIGCMLFVALVMNPLIVF, MAGAAITITVLTLAAVHTLGI, VVAAVCACGASGVAGGSLLLI, and LFGIPSEIAMQVVAVGFIIGV.

This sequence belongs to the dicarboxylate/amino acid:cation symporter (DAACS) (TC 2.A.23) family.

The protein resides in the cell inner membrane. It carries out the reaction L-serine(in) + Na(+)(in) = L-serine(out) + Na(+)(out). It catalyses the reaction L-threonine(in) + Na(+)(in) = L-threonine(out) + Na(+)(out). Involved in the import of serine and threonine into the cell, with the concomitant import of sodium (symport system). This chain is Serine/threonine transporter SstT, found in Pseudomonas putida (strain ATCC 47054 / DSM 6125 / CFBP 8728 / NCIMB 11950 / KT2440).